Here is a 418-residue protein sequence, read N- to C-terminus: Serine hydroxymethyltransferase (418 aa).

Residues Leu-121 and 125 to 127 each bind (6S)-5,6,7,8-tetrahydrofolate; that span reads GHL. Lys-230 is modified (N6-(pyridoxal phosphate)lysine). A (6S)-5,6,7,8-tetrahydrofolate-binding site is contributed by 355–357; that stretch reads SPF.

Belongs to the SHMT family. Homodimer. The cofactor is pyridoxal 5'-phosphate.

The protein localises to the cytoplasm. The catalysed reaction is (6R)-5,10-methylene-5,6,7,8-tetrahydrofolate + glycine + H2O = (6S)-5,6,7,8-tetrahydrofolate + L-serine. It functions in the pathway one-carbon metabolism; tetrahydrofolate interconversion. It participates in amino-acid biosynthesis; glycine biosynthesis; glycine from L-serine: step 1/1. Its function is as follows. Catalyzes the reversible interconversion of serine and glycine with tetrahydrofolate (THF) serving as the one-carbon carrier. This reaction serves as the major source of one-carbon groups required for the biosynthesis of purines, thymidylate, methionine, and other important biomolecules. Also exhibits THF-independent aldolase activity toward beta-hydroxyamino acids, producing glycine and aldehydes, via a retro-aldol mechanism. The sequence is that of Serine hydroxymethyltransferase from Streptococcus pyogenes serotype M5 (strain Manfredo).